Here is a 485-residue protein sequence, read N- to C-terminus: T-complex protein 1 subunit theta (485 aa).

It belongs to the TCP-1 chaperonin family. As to quaternary structure, component of the T-complex protein 1 (TCP1) complex.

The protein localises to the cytoplasm. Molecular chaperone; assists the folding of proteins upon ATP hydrolysis. The polypeptide is T-complex protein 1 subunit theta (CCT8) (Encephalitozoon cuniculi (strain GB-M1) (Microsporidian parasite)).